The sequence spans 377 residues: Cobalt-precorrin-5B C(1)-methyltransferase (377 aa).

The segment at 1–21 (MNPVRQPYDLAAPAPNGMRRG) is disordered.

Belongs to the CbiD family.

It catalyses the reaction Co-precorrin-5B + S-adenosyl-L-methionine = Co-precorrin-6A + S-adenosyl-L-homocysteine. Its pathway is cofactor biosynthesis; adenosylcobalamin biosynthesis; cob(II)yrinate a,c-diamide from sirohydrochlorin (anaerobic route): step 6/10. Catalyzes the methylation of C-1 in cobalt-precorrin-5B to form cobalt-precorrin-6A. This is Cobalt-precorrin-5B C(1)-methyltransferase from Chromobacterium violaceum (strain ATCC 12472 / DSM 30191 / JCM 1249 / CCUG 213 / NBRC 12614 / NCIMB 9131 / NCTC 9757 / MK).